The primary structure comprises 360 residues: Protein Wnt-2 (360 aa).

Positions 1–25 are cleaved as a signal peptide; sequence MNAPLGGIWLGLPLLLTWLSPEVSS. Cystine bridges form between Cys76/Cys87, Cys127/Cys135, Cys137/Cys157, Cys206/Cys220, Cys208/Cys215, Cys278/Cys309, Cys294/Cys304, Cys308/Cys348, Cys324/Cys339, Cys326/Cys336, and Cys331/Cys332. Ser212 is lipidated: O-palmitoleoyl serine; by PORCN. N-linked (GlcNAc...) asparagine glycosylation is present at Asn295.

The protein belongs to the Wnt family. In terms of processing, palmitoleoylation is required for efficient binding to frizzled receptors. Depalmitoleoylation leads to Wnt signaling pathway inhibition.

The protein localises to the secreted. Its subcellular location is the extracellular space. It localises to the extracellular matrix. Ligand for members of the frizzled family of seven transmembrane receptors. Probable developmental protein. May be a signaling molecule which affects the development of discrete regions of tissues. Is likely to signal over only few cell diameters. This Oryctolagus cuniculus (Rabbit) protein is Protein Wnt-2 (WNT2).